We begin with the raw amino-acid sequence, 520 residues long: Glycosyl hydrolase family 109 protein 5 (520 aa).

Residues 1 to 27 (MRTFKSLMISLCMGTTLCMCLPQTTTA) form the signal peptide. NAD(+)-binding positions include 77 to 78 (MR), Asp99, 147 to 150 (WLHH), 167 to 168 (EV), and Asn196. Residues Tyr225, Arg248, 260 to 263 (YATH), and Tyr338 each bind substrate. Tyr260 contributes to the NAD(+) binding site.

Belongs to the Gfo/Idh/MocA family. Glycosyl hydrolase 109 subfamily. NAD(+) serves as cofactor.

Functionally, glycosidase. The sequence is that of Glycosyl hydrolase family 109 protein 5 from Phocaeicola vulgatus (strain ATCC 8482 / DSM 1447 / JCM 5826 / CCUG 4940 / NBRC 14291 / NCTC 11154) (Bacteroides vulgatus).